Reading from the N-terminus, the 280-residue chain is Cytochrome bc1 complex cytochrome c subunit (280 aa).

Residues 25–45 (LSGGVLLLIALTIAGGLAAVL) form a helical membrane-spanning segment. Cytochrome c domains are found at residues 60 to 140 (ALLR…QANG) and 161 to 239 (NDLG…KVAT). Cys73, Cys76, His77, Cys174, Cys177, and His178 together coordinate heme c. A helical membrane pass occupies residues 258 to 278 (GMAMWIIGMVAAIGLALWIGA).

In terms of assembly, the cytochrome bc1 complex is composed of a cytochrome b (QcrB), the Rieske iron-sulfur protein (QcrA) and a diheme cytochrome c (QcrC) subunit. Post-translationally, binds 2 heme c groups covalently per subunit.

It localises to the cell membrane. It carries out the reaction a quinol + 2 Fe(III)-[cytochrome c](out) = a quinone + 2 Fe(II)-[cytochrome c](out) + 2 H(+)(out). Functionally, cytochrome b subunit of the cytochrome bc1 complex, an essential component of the respiratory electron transport chain required for ATP synthesis. The bc1 complex catalyzes the oxidation of ubiquinol and the reduction of cytochrome c in the respiratory chain. The bc1 complex operates through a Q-cycle mechanism that couples electron transfer to generation of the proton gradient that drives ATP synthesis. This Mycobacterium bovis (strain ATCC BAA-935 / AF2122/97) protein is Cytochrome bc1 complex cytochrome c subunit (qcrC).